The primary structure comprises 287 residues: Inorganic pyrophosphatase (287 aa).

Arg79 provides a ligand contact to diphosphate. Mg(2+)-binding residues include Asp116, Asp121, and Asp153.

Belongs to the PPase family. Requires Mg(2+) as cofactor.

Its subcellular location is the cytoplasm. It carries out the reaction diphosphate + H2O = 2 phosphate + H(+). This chain is Inorganic pyrophosphatase (IPP1), found in Eremothecium gossypii (strain ATCC 10895 / CBS 109.51 / FGSC 9923 / NRRL Y-1056) (Yeast).